A 68-amino-acid polypeptide reads, in one-letter code: DNA-directed RNA polymerase subunit omega (68 aa).

It belongs to the RNA polymerase subunit omega family. In terms of assembly, the RNAP catalytic core consists of 2 alpha, 1 beta, 1 beta' and 1 omega subunit. When a sigma factor is associated with the core the holoenzyme is formed, which can initiate transcription.

The catalysed reaction is RNA(n) + a ribonucleoside 5'-triphosphate = RNA(n+1) + diphosphate. Functionally, promotes RNA polymerase assembly. Latches the N- and C-terminal regions of the beta' subunit thereby facilitating its interaction with the beta and alpha subunits. This chain is DNA-directed RNA polymerase subunit omega, found in Brevibacillus brevis (strain 47 / JCM 6285 / NBRC 100599).